A 408-amino-acid polypeptide reads, in one-letter code: Sporulation integral membrane protein YlbJ (408 aa).

8 helical membrane-spanning segments follow: residues 6–26 (INTL…ISHP), 43–63 (VVFP…GFGI), 81–101 (VPGV…PAGA), 131–151 (LFIF…GILL), 214–234 (VTSS…FSVF), 294–314 (IIVS…VAGI), 324–344 (PFFI…MLLW), and 377–397 (LLVQ…IIIF).

It is found in the cell membrane. Required for spore cortex formation. This chain is Sporulation integral membrane protein YlbJ (ylbJ), found in Bacillus subtilis (strain 168).